The chain runs to 589 residues: Zinc finger and BTB domain-containing protein 46 (589 aa).

The BTB domain occupies 31-99 (CDVCVVVEGK…MYSAHLALTS (69 aa)). The tract at residues 173 to 330 (RRTSPANSSG…ASSSDSRGER (158 aa)) is disordered. Residues 197–207 (GKEDQEPKADG) show a composition bias toward basic and acidic residues. Lys229 participates in a covalent cross-link: Glycyl lysine isopeptide (Lys-Gly) (interchain with G-Cter in SUMO2). Ser234 carries the phosphoserine modification. Residues 305–325 (WPFSSRDSNADLSVTEASSSD) are compositionally biased toward polar residues. C2H2-type zinc fingers lie at residues 418-436 (FKCP…LKRH) and 446-468 (YPCE…TLVH). A disordered region spans residues 512–589 (PLDHGGGGGE…GPDKDFAWLS (78 aa)). Residues 546–570 (EELGEDDEGLAPEDALLADDKDEED) are compositionally biased toward acidic residues.

Sumoylated. Desumoylation by DESI1 reverses transcriptional repression activity.

It is found in the nucleus. Functionally, functions as a transcriptional repressor for PRDM1. This chain is Zinc finger and BTB domain-containing protein 46 (ZBTB46), found in Homo sapiens (Human).